The chain runs to 217 residues: Pyridoxine/pyridoxamine 5'-phosphate oxidase (217 aa).

Residues 13–16 (RREY) and Lys-71 contribute to the substrate site. Residues 66–71 (RIVLLK), 81–82 (YT), Arg-87, Lys-88, and Gln-110 each bind FMN. Substrate is bound by residues Tyr-128, Arg-132, and Ser-136. FMN-binding positions include 145–146 (QS) and Trp-190. 196–198 (RLH) provides a ligand contact to substrate. Arg-200 is a binding site for FMN.

Belongs to the pyridoxamine 5'-phosphate oxidase family. In terms of assembly, homodimer. FMN is required as a cofactor.

It carries out the reaction pyridoxamine 5'-phosphate + O2 + H2O = pyridoxal 5'-phosphate + H2O2 + NH4(+). The enzyme catalyses pyridoxine 5'-phosphate + O2 = pyridoxal 5'-phosphate + H2O2. It functions in the pathway cofactor metabolism; pyridoxal 5'-phosphate salvage; pyridoxal 5'-phosphate from pyridoxamine 5'-phosphate: step 1/1. Its pathway is cofactor metabolism; pyridoxal 5'-phosphate salvage; pyridoxal 5'-phosphate from pyridoxine 5'-phosphate: step 1/1. In terms of biological role, catalyzes the oxidation of either pyridoxine 5'-phosphate (PNP) or pyridoxamine 5'-phosphate (PMP) into pyridoxal 5'-phosphate (PLP). This is Pyridoxine/pyridoxamine 5'-phosphate oxidase from Yersinia enterocolitica serotype O:8 / biotype 1B (strain NCTC 13174 / 8081).